We begin with the raw amino-acid sequence, 1076 residues long: Nickel-cobalt-cadmium resistance protein NccA (1076 aa).

Helical transmembrane passes span 14–34, 367–387, 391–411, 419–439, 476–496, 503–523, 562–582, 904–924, 929–949, 960–980, 1004–1024, and 1036–1056; these read WLVLFLTAVVGAIGAWQLNLL, VAKNLVEGAALVVVILFALLG, AAVIAALVIPLSLLISAIGMN, LMSLGALDFGLIIDGAVIIVE, TVYGQLVIFMVFLPCLTFQGV, PMVITLMLALASAFVLSLTFV, MPFLGAALVTLALAAMAFTFV, LAIIVPLCFILIAATLYMAIG, TATVLTAVPLALAGGVFALVL, VGFIAVSGVAVLNGLVLISAI, PVLMTALVASLGFVPMAIATG, and VVIGGLITATVLTLFVLPAVC.

Belongs to the resistance-nodulation-cell division (RND) (TC 2.A.6) family.

It is found in the cell membrane. Functionally, component of the NCC cation-efflux system that confers resistance to nickel, cobalt and cadmium. May form a membrane tunnel, which allows ion transport across the membrane. In Alcaligenes xylosoxydans xylosoxydans (Achromobacter xylosoxidans), this protein is Nickel-cobalt-cadmium resistance protein NccA (nccA).